A 156-amino-acid polypeptide reads, in one-letter code: uncharacterized protein (156 aa).

The protein localises to the mitochondrion. This is an uncharacterized protein from Paramecium tetraurelia.